A 348-amino-acid chain; its full sequence is Oxidase ucsJ (348 aa).

This sequence belongs to the avfA family.

The protein operates within mycotoxin biosynthesis. Oxidase; part of the gene cluster that mediates the biosynthesis of UCS1025A, a member of the pyrrolizidinone family that acts as a strong telomerase inhibitor and displays potent antibacterial and antitumor properties. These compounds share a hemiaminal-containing pyrrolizidinone core fused with a gamma-lactone, giving a furopyrrolizidine that is connected to a decalin fragment. The polyketide synthase module (PKS) of the PKS-NRPS ucsA is responsible for the synthesis of the polyketide backbone via the condensation of an acetyl-CoA starter unit with 6 malonyl-CoA units. The downstream nonribosomal peptide synthetase (NRPS) module then amidates the carboxyl end of the polyketide with a 2S,3S-methylproline derived from L-isoleucine by the 2-oxoglutarate-dependent dioxygenase ucsF which converts L-isoleucine to (4S,5S)-4-methylpyrroline-5-carboxylate that is further converted to 2S,3S-methylproline by the pyrroline-5-carboxylate reductase ucsG. Reductive release of the completed aminoacyl polyketide from the assembly line can form the 3-pyrrolin-2-one structure via an intramolecular Knoevenagel reaction. Because ucsA lacks a designated enoylreductase (ER) domain, the required activity is provided the enoyl reductase ucsL. This keto acyclic precursor is the substrate of the Diels-Alderase ucsH, that catalyzes the Diels-Alder cycloaddition. Oxidation of the 3S-methyl group to a carboxylate by the cytochrome P450 monooxygenase ucsK allows an oxa-Michael cyclization that might involve the reductase/dehydrogenase ucsI and which furnishes the furopyrrolizidine. The oxidase ucsJ likely plays a critical role in stereoselective reduction of the C5-C6 double bond to afford the required R-configured carboxylate group. Further enolization and oxidation at C5 by an unidentified enzyme affords the last intermediate that can undergo oxa-Michael cyclization to yield UCS1025A. The polypeptide is Oxidase ucsJ (Acremonium sp).